A 475-amino-acid polypeptide reads, in one-letter code: Ribulose bisphosphate carboxylase large chain (475 aa).

Residues 1-2 (MS) constitute a propeptide that is removed on maturation. At proline 3 the chain carries N-acetylproline. N6,N6,N6-trimethyllysine is present on lysine 14. 2 residues coordinate substrate: asparagine 123 and threonine 173. Lysine 175 serves as the catalytic Proton acceptor. Residue lysine 177 coordinates substrate. The Mg(2+) site is built by lysine 201, aspartate 203, and glutamate 204. Lysine 201 is subject to N6-carboxylysine. Histidine 294 acts as the Proton acceptor in catalysis. Arginine 295, histidine 327, and serine 379 together coordinate substrate.

This sequence belongs to the RuBisCO large chain family. Type I subfamily. As to quaternary structure, heterohexadecamer of 8 large chains and 8 small chains; disulfide-linked. The disulfide link is formed within the large subunit homodimers. Mg(2+) serves as cofactor. The disulfide bond which can form in the large chain dimeric partners within the hexadecamer appears to be associated with oxidative stress and protein turnover.

Its subcellular location is the plastid. It localises to the chloroplast. The enzyme catalyses 2 (2R)-3-phosphoglycerate + 2 H(+) = D-ribulose 1,5-bisphosphate + CO2 + H2O. It catalyses the reaction D-ribulose 1,5-bisphosphate + O2 = 2-phosphoglycolate + (2R)-3-phosphoglycerate + 2 H(+). Functionally, ruBisCO catalyzes two reactions: the carboxylation of D-ribulose 1,5-bisphosphate, the primary event in carbon dioxide fixation, as well as the oxidative fragmentation of the pentose substrate in the photorespiration process. Both reactions occur simultaneously and in competition at the same active site. The chain is Ribulose bisphosphate carboxylase large chain from Tsuga heterophylla (Western hemlock).